Reading from the N-terminus, the 887-residue chain is Alanine--tRNA ligase (887 aa).

4 residues coordinate Zn(2+): H564, H568, C676, and H680.

The protein belongs to the class-II aminoacyl-tRNA synthetase family. Requires Zn(2+) as cofactor.

Its subcellular location is the cytoplasm. The catalysed reaction is tRNA(Ala) + L-alanine + ATP = L-alanyl-tRNA(Ala) + AMP + diphosphate. Its function is as follows. Catalyzes the attachment of alanine to tRNA(Ala) in a two-step reaction: alanine is first activated by ATP to form Ala-AMP and then transferred to the acceptor end of tRNA(Ala). Also edits incorrectly charged Ser-tRNA(Ala) and Gly-tRNA(Ala) via its editing domain. The sequence is that of Alanine--tRNA ligase from Agrobacterium fabrum (strain C58 / ATCC 33970) (Agrobacterium tumefaciens (strain C58)).